A 98-amino-acid polypeptide reads, in one-letter code: Integration host factor subunit alpha (98 aa).

The tract at residues 49-71 (FGNFDLRDKNQRPGRNPKTGEDI) is disordered.

This sequence belongs to the bacterial histone-like protein family. As to quaternary structure, heterodimer of an alpha and a beta chain.

Functionally, this protein is one of the two subunits of integration host factor, a specific DNA-binding protein that functions in genetic recombination as well as in transcriptional and translational control. The protein is Integration host factor subunit alpha of Shewanella sp. (strain MR-4).